A 247-amino-acid chain; its full sequence is Putative trypsin-6 (247 aa).

Positions 1–15 are cleaved as a signal peptide; it reads MNPLLILAFVGAAVA. Residues 24–244 form the Peptidase S1 domain; the sequence is IVGGYTCEEN…YVDWIKDTIA (221 aa). C48 and C64 are oxidised to a cystine. H63 (charge relay system) is an active-site residue. Positions 75, 77, 80, and 85 each coordinate Ca(2+). Residue D107 is the Charge relay system of the active site. Cystine bridges form between C139–C206, C171–C185, and C196–C220. The Charge relay system role is filled by S200.

The protein belongs to the peptidase S1 family. Tryptase subfamily. As to expression, overexpressed in metastasing in non small cell lung tumors, leading to an enhanced cell migration.

It is found in the secreted. It carries out the reaction Preferential cleavage: Arg-|-Xaa, Lys-|-Xaa.. May regulate cell migration. This chain is Putative trypsin-6 (PRSS3P2), found in Homo sapiens (Human).